The following is a 221-amino-acid chain: Dynein light chain Tctex-type 4 (221 aa).

Disordered regions lie at residues 1–52 (MASR…SRRG) and 65–87 (NSLV…VPPL). Over residues 10 to 21 (RQEEENAKDSGR) the composition is skewed to basic and acidic residues. Serine 66 bears the Phosphoserine mark.

Belongs to the dynein light chain Tctex-type family. Interacts with ENG/endoglin, TGFBR2 and TGFBR3. Interacts with PPP1CC. Ubiquitously expressed. Expressed in testis (at protein level).

The protein resides in the cell projection. Its subcellular location is the cilium. The protein localises to the flagellum. It localises to the cytoplasmic vesicle. It is found in the secretory vesicle. The protein resides in the acrosome. Its subcellular location is the cytoplasm. The protein localises to the cytoskeleton. It localises to the cilium axoneme. It is found in the nucleus. The protein resides in the microtubule organizing center. In Homo sapiens (Human), this protein is Dynein light chain Tctex-type 4.